We begin with the raw amino-acid sequence, 361 residues long: Alternative oxidase, mitochondrial (361 aa).

Residues 155 to 175 (LIRYVFLESVAGVPGMVAGML) traverse the membrane as a helical segment. Fe cation-binding residues include Glu-162, Glu-201, and His-204. A helical membrane pass occupies residues 221–241 (MILGAQGVFFNSFFLCYLFSP). Fe cation is bound by residues Glu-252, Glu-253, Glu-309, and His-312. The interval 320-361 (GNLKQDEDPNPFVSEYGKERGEKPGKGIESLKPVGWERDEVI) is disordered. Positions 335 to 345 (YGKERGEKPGK) are enriched in basic and acidic residues.

The protein belongs to the alternative oxidase family. It depends on Fe cation as a cofactor.

It localises to the mitochondrion inner membrane. Its function is as follows. Catalyzes cyanide-resistant oxygen consumption. May increase respiration when the cytochrome respiratory pathway is restricted, or in response to low temperatures. This chain is Alternative oxidase, mitochondrial (aox), found in Botryotinia fuckeliana (Noble rot fungus).